A 116-amino-acid polypeptide reads, in one-letter code: NADPH-dependent 7-cyano-7-deazaguanine reductase (116 aa).

The active-site Thioimide intermediate is C31. The active-site Proton donor is D38. Residues 53–55 (IEL) and 72–73 (YE) each bind substrate.

The protein belongs to the GTP cyclohydrolase I family. QueF type 1 subfamily.

Its subcellular location is the cytoplasm. It catalyses the reaction 7-aminomethyl-7-carbaguanine + 2 NADP(+) = 7-cyano-7-deazaguanine + 2 NADPH + 3 H(+). The protein operates within tRNA modification; tRNA-queuosine biosynthesis. Catalyzes the NADPH-dependent reduction of 7-cyano-7-deazaguanine (preQ0) to 7-aminomethyl-7-deazaguanine (preQ1). This chain is NADPH-dependent 7-cyano-7-deazaguanine reductase, found in Chlorobaculum parvum (strain DSM 263 / NCIMB 8327) (Chlorobium vibrioforme subsp. thiosulfatophilum).